Reading from the N-terminus, the 707-residue chain is Mitochondrial disaggregase (707 aa).

Residues 1 to 36 constitute a mitochondrion transit peptide; that stretch reads MLGSLVLRRKALAPRLLLRLLRSPTLRGHGGASGRN. An autoinhibitory region spans residues 92–126; the sequence is PGPEETLPGQDSWNGVPSRAGLGMCALAAALVVHC. ANK repeat units follow at residues 133–162, 166–195, 265–295, and 298–327; these read NKDAALLEAARANNMQEVSRLLSEGADVNA, LGWTALMVAAINRNNSVVQVLLAAGADPNL, KGCTALHYAVLADDYRTVKELLDGGANPLQR, and MGHTPLDYAREGEVMKLLRTSEAKYQEKQR. ATP-binding residues include His346, Ile348, Ser383, Gly384, Ile385, Gly386, Lys387, Thr388, Glu455, and Asn496. A regulatory; slows ATPase and disaggregase activities region spans residues 507-535; the sequence is LQLRQEALEMSRNRIAENLGDVQISDKIT. An ATP-binding site is contributed by Arg561. Lys589 is modified (N6-acetyllysine). ATP is bound at residue Arg620.

Belongs to the ClpA/ClpB family. In terms of assembly, homododecamer when substrate-bound; the homododecamer consists of 2 homohexamers stacked head-to-head via ANK repeat-mediated interactions. The active substrate-bound form is likely to exist in a dynamic equilibrium between homohexamers and homododecamers. Homotetradecamer in the unbound state which is remodeled upon substrate binding into the homododecamer. Interacts with PHB and PHB2. Interacts with MAVS; the interaction is enhanced by Sendai virus infection. Post-translationally, proteolytically cleaved by protease PARL. ATP-dependent protein disaggregase activity is stimulated by PARL-mediated cleavage of the N-terminal autoinhibitory peptide. As to expression, widely expressed (at protein level). Expressed in fetal, as well as in adult tissues, with highest levels in adult brain, including thalamus, hippocampus, occipital cortex and parietal cortex. Low expression in granulocytes.

It is found in the mitochondrion intermembrane space. The catalysed reaction is ATP + H2O = ADP + phosphate + H(+). Disaggregase activity is inhibited by ADP. Functions as a regulatory ATPase and participates in secretion/protein trafficking process. Has ATP-dependent protein disaggregase activity and is required to maintain the solubility of key mitochondrial proteins. Involved in mitochondrial-mediated antiviral innate immunity, activates RIG-I-mediated signal transduction and production of IFNB1 and pro-inflammatory cytokine IL6. Plays a role in granulocyte differentiation. The sequence is that of Mitochondrial disaggregase from Homo sapiens (Human).